We begin with the raw amino-acid sequence, 194 residues long: Lytic chitin monooxygenase (194 aa).

The signal sequence occupies residues 1–28; that stretch reads MKKSLLTIVLAFSFVLGGAALAPTVSEA. His29 and His114 together coordinate Cu cation. Positions 29–191 constitute a Chitin-binding type-4 domain; it reads HGYVASPGSR…VNAFYQAIDV (163 aa).

It depends on Cu(2+) as a cofactor.

The protein resides in the secreted. It carries out the reaction [(1-&gt;4)-N-acetyl-beta-D-glucosaminyl]n+m + reduced acceptor + O2 = [(1-&gt;4)-N-acetyl-beta-D-glucosaminyl]m-1-(1-&gt;4)-2-(acetylamino)-2-deoxy-D-glucono-1,5-lactone + [(1-&gt;4)-N-acetyl-beta-D-glucosaminyl]n + acceptor + H2O.. The protein operates within glycan degradation; chitin degradation. In terms of biological role, involved in chitin degradation. Catalyzes the oxidative cleavage of glycosidic bonds in both alpha- and beta-chitin via a copper-dependent mechanism, leading to oxidized chitooligosaccharides with a dominance of even-numbered products. Acts synergistically with the chitinase EfChi18A, and combining the two enzymes leads to rapid and complete depolymerization of crystalline chitin, especially with beta-chitin as a substrate. Is likely involved in a chitin degradation pathway that allows E.faecalis V583 to grow on chitin as a carbon source. In Enterococcus faecalis (strain ATCC 700802 / V583), this protein is Lytic chitin monooxygenase.